Here is a 23-residue protein sequence, read N- to C-terminus: Septenin 2c (23 aa).

In terms of tissue distribution, expressed in skin granular glands.

Its subcellular location is the secreted. May act as an antimicrobial peptide. This chain is Septenin 2c, found in Osteopilus septentrionalis (Cuban treefrog).